The following is a 117-amino-acid chain: Large ribosomal subunit protein uL18 (117 aa).

The protein belongs to the universal ribosomal protein uL18 family. As to quaternary structure, part of the 50S ribosomal subunit; part of the 5S rRNA/L5/L18/L25 subcomplex. Contacts the 5S and 23S rRNAs.

Its function is as follows. This is one of the proteins that bind and probably mediate the attachment of the 5S RNA into the large ribosomal subunit, where it forms part of the central protuberance. In Mannheimia succiniciproducens (strain KCTC 0769BP / MBEL55E), this protein is Large ribosomal subunit protein uL18.